The chain runs to 605 residues: Microtubule-associated protein VP10 (605 aa).

In terms of assembly, interacts with VP1.

It is found in the virion. Its subcellular location is the host cytoplasm. The protein localises to the host cytoskeleton. Functionally, minor inner capsid component. Displays NTPase and RNA 5'-triphosphatase (RTPase) activities. May function as a cofactor of polymerase VP1. Associates with microtubules and plays a role in the formation, structural organization and morphology of viral inclusions, where the assembly of cores and the replication of viral RNA occur. This is Microtubule-associated protein VP10 from Colorado tick fever virus (strain USA/Florio N-7180) (CTFV).